The primary structure comprises 360 residues: DNA replication and repair protein RecF (360 aa).

33 to 40 lines the ATP pocket; that stretch reads GENGSGKT.

Belongs to the RecF family.

Its subcellular location is the cytoplasm. Its function is as follows. The RecF protein is involved in DNA metabolism; it is required for DNA replication and normal SOS inducibility. RecF binds preferentially to single-stranded, linear DNA. It also seems to bind ATP. This is DNA replication and repair protein RecF from Rickettsia typhi (strain ATCC VR-144 / Wilmington).